The primary structure comprises 720 residues: Glutaryl-7-aminocephalosporanic-acid acylase (720 aa).

Positions 1 to 29 (MLRVLHRAASALVMATVIGLAPGVAFALA) are cleaved as a signal peptide. Positions 188–198 (EGDPPDLADQG) are cleaved as a propeptide — spacer peptide. The active-site Nucleophile is serine 199. Catalysis depends on residues histidine 221 and glutamate 653.

It belongs to the peptidase S45 family. Heterodimer of a small subunit and a large subunit processed from the same precursor.

The protein resides in the periplasm. The enzyme catalyses (7R)-7-(4-carboxybutanamido)cephalosporanate + H2O = (7R)-7-aminocephalosporanate + glutarate. Catalyzes the deacylation of 7 beta-(4-carboxybutanamido)cephalosporanic acid (glutaryl-7-aminocephalosporanic acid or GL-7-ACA) to 7-aminocephalosporanic acid (7-ACA). Cannot efficiently use cephalosporin C (CPC), penicillin G, or ampicillin as substrates. This chain is Glutaryl-7-aminocephalosporanic-acid acylase, found in Brevundimonas diminuta (Pseudomonas diminuta).